Here is a 1295-residue protein sequence, read N- to C-terminus: DNA-directed RNA polymerase subunit beta' (1295 aa).

Residues Cys60, Cys62, Cys75, and Cys78 each coordinate Zn(2+). Mg(2+) is bound by residues Asp516, Asp518, and Asp520. Zn(2+) contacts are provided by Cys841, Cys914, Cys921, and Cys924.

The protein belongs to the RNA polymerase beta' chain family. In terms of assembly, the RNAP catalytic core consists of 2 alpha, 1 beta, 1 beta' and 1 omega subunit. When a sigma factor is associated with the core the holoenzyme is formed, which can initiate transcription. The cofactor is Mg(2+). Requires Zn(2+) as cofactor.

It catalyses the reaction RNA(n) + a ribonucleoside 5'-triphosphate = RNA(n+1) + diphosphate. DNA-dependent RNA polymerase catalyzes the transcription of DNA into RNA using the four ribonucleoside triphosphates as substrates. The chain is DNA-directed RNA polymerase subunit beta' from Dehalococcoides mccartyi (strain ATCC BAA-2100 / JCM 16839 / KCTC 5957 / BAV1).